Consider the following 126-residue polypeptide: Small ribosomal subunit protein uS13 (126 aa).

Residues 99 to 126 are disordered; the sequence is LRGQSTKNNARTRKGKKKTVANKKKATK. Basic residues predominate over residues 108-126; it reads ARTRKGKKKTVANKKKATK.

It belongs to the universal ribosomal protein uS13 family. Part of the 30S ribosomal subunit. Forms a loose heterodimer with protein S19. Forms two bridges to the 50S subunit in the 70S ribosome.

Located at the top of the head of the 30S subunit, it contacts several helices of the 16S rRNA. In the 70S ribosome it contacts the 23S rRNA (bridge B1a) and protein L5 of the 50S subunit (bridge B1b), connecting the 2 subunits; these bridges are implicated in subunit movement. Contacts the tRNAs in the A and P-sites. The chain is Small ribosomal subunit protein uS13 from Porphyromonas gingivalis (strain ATCC 33277 / DSM 20709 / CIP 103683 / JCM 12257 / NCTC 11834 / 2561).